Here is a 1009-residue protein sequence, read N- to C-terminus: MAQLFTKIIVYFLLFASPLLANQWPLHNNSLNDVVQWDHYSFEINGQRLFVFAGEWHYWRIPVPELWIDILEKIKAAGFTAFGIYVNWAYHAPNNYTVDFATGAHDITPILKMAKDVGLYVLLRPGPYINAEVNAGGFPLWVTTGEYGSLRNDDSRYTAAWEPYFTKISEIASEYQITKGGNVVTYQIENEFGDQWTGSPSRRVQYEPAAKYMELLEANARRNGIDIPLVANEPNMRAISWGKDWSNSSANVDVVGLDSYPSCWTCDLSVCTGTTGEYIAYQVIDYYGYFQETQPTMPSFFAEFQGGSYNPWGGPVGGCPEDIGPDFANLFYRWNIGQRVTAINLYMLYGGTNWGAIAAPVVASSYDYSSPISENRTIGAKYYETKLLTMFTRAARDLIVTDLIGNGTQYSTNPAIQTHVIRNPITNGTFYVTLHTISSSSTDETFQLHVNTSAGAFSIPRYGNSIRLNGHQSKIIVTDFQFGTHKLLYSTAEVLTYTVLDGIPTLALWVPTGESGEFSVLGGKWASVLRCEWCSDIQFHPEQDQTSNPTVSRLTVSFTQGQGMSVIKLDTGLRVVLLDRESAYYFWAPALNSDPSVPEDQSVLVQGPHLVRSAKIVGSTIRLTGDSAQTSPIEVFAPKQVRIIFWNDKELKTSKTSYDSLQASLPQPAYVKLPLLGPWKYNGSLPEKAQDYKDTSAAWISADHMKTSNPSPPATFPVLYADEYGFHNSIRIWRGYFTGNATGVVLKVQGGYAFGFSGWLNGKLLGSYLGNASVEHSHLTLPFNVSHVSTSSDNVLVIVHDDTGHDETTGALNPRGILEATLLSDNSSSKFSHWRVAGTAGGETNIDPMRGPYNEGGLYAERMGWHLPGFNDNAWSDAGSKLNFTGADIKFYRTTVPLNIPKGVDVSISFELSACGTTNAFRSQLFVNGYQMGRFNPWVGNQIEFPVPPGILDYTGDNTIGLSLWAQTEDGACAIVDWKINYVLGSSLDVTFNGEYLRPGWTSERLQYS.

Positions 1–21 (MAQLFTKIIVYFLLFASPLLA) are cleaved as a signal peptide. A glycan (N-linked (GlcNAc...) asparagine) is linked at N28. Y85 contacts substrate. Residue N95 is glycosylated (N-linked (GlcNAc...) asparagine). N130, A131, E132, and N190 together coordinate substrate. The Proton donor role is filled by E191. N247 carries an N-linked (GlcNAc...) asparagine glycan. Y260 lines the substrate pocket. Cysteines 266 and 319 form a disulfide. E303 acts as the Nucleophile in catalysis. Y368 is a binding site for substrate. Residues N375, N406, N427, N451, N682, N740, N771, N784, N826, and N883 are each glycosylated (N-linked (GlcNAc...) asparagine).

The protein belongs to the glycosyl hydrolase 35 family.

It localises to the secreted. It carries out the reaction Hydrolysis of terminal non-reducing beta-D-galactose residues in beta-D-galactosides.. Cleaves beta-linked terminal galactosyl residues from gangliosides, glycoproteins, and glycosaminoglycans. This is Probable beta-galactosidase B (lacB) from Talaromyces marneffei (strain ATCC 18224 / CBS 334.59 / QM 7333) (Penicillium marneffei).